The following is an 87-amino-acid chain: Anaphase-promoting complex subunit 11 (87 aa).

Residues 35–77 (CVDCKIPGDDCPPVWGVCNHAFHMHCILKWLNANELQQCPMCR) form an RING-type; atypical zinc finger.

The protein belongs to the RING-box family. The APC/C is composed of at least 13 subunits that stay tightly associated throughout the cell cycle: anapc1, anapc2, anapc3, anapc4, anapc5, anapc6, anapc7, anapc8, anapc10, anapc11, cdc20, cdc26 and cdh1.

It localises to the nucleus. The protein operates within protein modification; protein ubiquitination. In terms of biological role, component of the anaphase promoting complex/cyclosome (APC/C), a cell cycle-regulated E3 ubiquitin-protein ligase complex that controls progression through mitosis and the G1 phase of the cell cycle. This Dictyostelium discoideum (Social amoeba) protein is Anaphase-promoting complex subunit 11 (anapc11).